Consider the following 141-residue polypeptide: Small ribosomal subunit protein eS17w (141 aa).

Belongs to the eukaryotic ribosomal protein eS17 family.

The protein is Small ribosomal subunit protein eS17w (RPS17D) of Arabidopsis thaliana (Mouse-ear cress).